The sequence spans 199 residues: N-(5'-phosphoribosyl)anthranilate isomerase (199 aa).

This sequence belongs to the TrpF family.

It catalyses the reaction N-(5-phospho-beta-D-ribosyl)anthranilate = 1-(2-carboxyphenylamino)-1-deoxy-D-ribulose 5-phosphate. It functions in the pathway amino-acid biosynthesis; L-tryptophan biosynthesis; L-tryptophan from chorismate: step 3/5. The sequence is that of N-(5'-phosphoribosyl)anthranilate isomerase from Campylobacter jejuni subsp. jejuni serotype O:2 (strain ATCC 700819 / NCTC 11168).